We begin with the raw amino-acid sequence, 211 residues long: MKKSILTAFYGGTFDPIHNGHIKSAIALAKLIHLNRIILIPNGSPVHKPIPVASAEDRINMINLAISEISEDIFEIDYREINNKIPSYTINTFENLRKEYGPKAPLGFILGQDSFMKLHTWYRGYDILKFCHLLICARSNNMINLKKIKFKFIDPKILHYIPFGLIYYAFTPIIKISSRNIRLRYKFGISCNGLISSSVQKYINKKNIYKR.

It belongs to the NadD family.

The enzyme catalyses nicotinate beta-D-ribonucleotide + ATP + H(+) = deamido-NAD(+) + diphosphate. It participates in cofactor biosynthesis; NAD(+) biosynthesis; deamido-NAD(+) from nicotinate D-ribonucleotide: step 1/1. In terms of biological role, catalyzes the reversible adenylation of nicotinate mononucleotide (NaMN) to nicotinic acid adenine dinucleotide (NaAD). This is Probable nicotinate-nucleotide adenylyltransferase from Wigglesworthia glossinidia brevipalpis.